The chain runs to 36 residues: Protein P4 (36 aa).

The chain crosses the membrane as a helical span at residues 13-33 (GLQLSLLICACLLAVLIVSFC).

The protein localises to the host membrane. This Vitis vinifera (Grape) protein is Protein P4.